The primary structure comprises 380 residues: Cytochrome b (380 aa).

A run of 4 helical transmembrane segments spans residues 34 to 54 (FGSL…LLAM), 78 to 99 (WLIR…FLHI), 114 to 134 (WNTG…GYVL), and 179 to 199 (FFAL…THLM). Residues His-84 and His-98 each coordinate heme b. His-183 and His-197 together coordinate heme b. Position 202 (His-202) interacts with a ubiquinone. 4 helical membrane passes run 227 to 247 (LKDI…ALFS), 289 to 309 (LGGV…PFLH), 321 to 341 (LSQA…WVGS), and 348 to 368 (FIII…ILFP).

It belongs to the cytochrome b family. As to quaternary structure, the cytochrome bc1 complex contains 11 subunits: 3 respiratory subunits (MT-CYB, CYC1 and UQCRFS1), 2 core proteins (UQCRC1 and UQCRC2) and 6 low-molecular weight proteins (UQCRH/QCR6, UQCRB/QCR7, UQCRQ/QCR8, UQCR10/QCR9, UQCR11/QCR10 and a cleavage product of UQCRFS1). This cytochrome bc1 complex then forms a dimer. Requires heme b as cofactor.

The protein localises to the mitochondrion inner membrane. Its function is as follows. Component of the ubiquinol-cytochrome c reductase complex (complex III or cytochrome b-c1 complex) that is part of the mitochondrial respiratory chain. The b-c1 complex mediates electron transfer from ubiquinol to cytochrome c. Contributes to the generation of a proton gradient across the mitochondrial membrane that is then used for ATP synthesis. This Syrmaticus reevesii (Reeves's pheasant) protein is Cytochrome b (MT-CYB).